A 657-amino-acid polypeptide reads, in one-letter code: Glycogen debranching enzyme (657 aa).

The Nucleophile role is filled by Asp336. Catalysis depends on Glu371, which acts as the Proton donor. Positions 460–479 are disordered; it reads ANGEENRDGTNNNYSNNHGK.

The protein belongs to the glycosyl hydrolase 13 family.

It catalyses the reaction Hydrolysis of (1-&gt;6)-alpha-D-glucosidic linkages to branches with degrees of polymerization of three or four glucose residues in limit dextrin.. Its pathway is glycan degradation; glycogen degradation. Its function is as follows. Removes maltotriose and maltotetraose chains that are attached by 1,6-alpha-linkage to the limit dextrin main chain, generating a debranched limit dextrin. The sequence is that of Glycogen debranching enzyme from Escherichia coli O81 (strain ED1a).